The following is an 84-amino-acid chain: Cell division topological specificity factor (84 aa).

Belongs to the MinE family.

Functionally, prevents the cell division inhibition by proteins MinC and MinD at internal division sites while permitting inhibition at polar sites. This ensures cell division at the proper site by restricting the formation of a division septum at the midpoint of the long axis of the cell. The polypeptide is Cell division topological specificity factor (Ectopseudomonas mendocina (strain ymp) (Pseudomonas mendocina)).